Here is a 254-residue protein sequence, read N- to C-terminus: Acetylglutamate kinase (254 aa).

Substrate contacts are provided by residues 40–41, R62, and N158; that span reads GG.

Belongs to the acetylglutamate kinase family. ArgB subfamily.

Its subcellular location is the cytoplasm. It catalyses the reaction N-acetyl-L-glutamate + ATP = N-acetyl-L-glutamyl 5-phosphate + ADP. Its pathway is amino-acid biosynthesis; L-arginine biosynthesis; N(2)-acetyl-L-ornithine from L-glutamate: step 2/4. Catalyzes the ATP-dependent phosphorylation of N-acetyl-L-glutamate. The chain is Acetylglutamate kinase from Chloroflexus aurantiacus (strain ATCC 29366 / DSM 635 / J-10-fl).